We begin with the raw amino-acid sequence, 660 residues long: Bifunctional polymyxin resistance protein ArnA (660 aa).

Residues 1–304 (MKTVVFAYHD…TLGLVQGSRL (304 aa)) are formyltransferase ArnAFT. 86 to 88 (HLI) is a binding site for (6R)-10-formyltetrahydrofolate. The active-site Proton donor; for formyltransferase activity is histidine 104. Residues arginine 114 and 136–140 (VKRAD) each bind (6R)-10-formyltetrahydrofolate. Residues 314-660 (RRTRVLILGV…RTVDLTDKPS (347 aa)) are dehydrogenase ArnADH. NAD(+) is bound by residues aspartate 347 and 368–369 (DI). Residues alanine 393, tyrosine 398, and 432-433 (TS) contribute to the UDP-alpha-D-glucuronate site. The active-site Proton acceptor; for decarboxylase activity is glutamate 434. UDP-alpha-D-glucuronate contacts are provided by residues arginine 460, asparagine 492, 526-535 (KLIDGGKQKR), and tyrosine 613. Arginine 619 acts as the Proton donor; for decarboxylase activity in catalysis.

This sequence in the N-terminal section; belongs to the Fmt family. UDP-L-Ara4N formyltransferase subfamily. In the C-terminal section; belongs to the NAD(P)-dependent epimerase/dehydratase family. UDP-glucuronic acid decarboxylase subfamily. In terms of assembly, homohexamer, formed by a dimer of trimers.

The catalysed reaction is UDP-alpha-D-glucuronate + NAD(+) = UDP-beta-L-threo-pentopyranos-4-ulose + CO2 + NADH. It carries out the reaction UDP-4-amino-4-deoxy-beta-L-arabinose + (6R)-10-formyltetrahydrofolate = UDP-4-deoxy-4-formamido-beta-L-arabinose + (6S)-5,6,7,8-tetrahydrofolate + H(+). It participates in nucleotide-sugar biosynthesis; UDP-4-deoxy-4-formamido-beta-L-arabinose biosynthesis; UDP-4-deoxy-4-formamido-beta-L-arabinose from UDP-alpha-D-glucuronate: step 1/3. It functions in the pathway nucleotide-sugar biosynthesis; UDP-4-deoxy-4-formamido-beta-L-arabinose biosynthesis; UDP-4-deoxy-4-formamido-beta-L-arabinose from UDP-alpha-D-glucuronate: step 3/3. The protein operates within bacterial outer membrane biogenesis; lipopolysaccharide biosynthesis. In terms of biological role, bifunctional enzyme that catalyzes the oxidative decarboxylation of UDP-glucuronic acid (UDP-GlcUA) to UDP-4-keto-arabinose (UDP-Ara4O) and the addition of a formyl group to UDP-4-amino-4-deoxy-L-arabinose (UDP-L-Ara4N) to form UDP-L-4-formamido-arabinose (UDP-L-Ara4FN). The modified arabinose is attached to lipid A and is required for resistance to polymyxin and cationic antimicrobial peptides. This chain is Bifunctional polymyxin resistance protein ArnA, found in Escherichia coli O127:H6 (strain E2348/69 / EPEC).